We begin with the raw amino-acid sequence, 346 residues long: Dihydroorotase (346 aa).

The Zn(2+) site is built by H14 and H16. Residues 16–18 (HLR) and N42 contribute to the substrate site. Residues K100, H137, and H175 each coordinate Zn(2+). The residue at position 100 (K100) is an N6-carboxylysine. A substrate-binding site is contributed by H137. L220 serves as a coordination point for substrate. Zn(2+) is bound at residue D248. D248 is a catalytic residue. Substrate contacts are provided by H252 and A264.

This sequence belongs to the metallo-dependent hydrolases superfamily. DHOase family. Class II DHOase subfamily. Homodimer. Zn(2+) is required as a cofactor.

The catalysed reaction is (S)-dihydroorotate + H2O = N-carbamoyl-L-aspartate + H(+). It functions in the pathway pyrimidine metabolism; UMP biosynthesis via de novo pathway; (S)-dihydroorotate from bicarbonate: step 3/3. Functionally, catalyzes the reversible cyclization of carbamoyl aspartate to dihydroorotate. The sequence is that of Dihydroorotase from Novosphingobium aromaticivorans (strain ATCC 700278 / DSM 12444 / CCUG 56034 / CIP 105152 / NBRC 16084 / F199).